A 306-amino-acid chain; its full sequence is Small ribosomal subunit biogenesis GTPase RsgA (306 aa).

The 160-residue stretch at 77–236 (KNELKRPNVA…IVDTPGFSKL (160 aa)) folds into the CP-type G domain. GTP contacts are provided by residues 126–129 (SKID) and 179–187 (GQTGVGKST). Positions 260, 266, 268, and 274 each coordinate Zn(2+).

This sequence belongs to the TRAFAC class YlqF/YawG GTPase family. RsgA subfamily. In terms of assembly, monomer. Associates with 30S ribosomal subunit, binds 16S rRNA. Zn(2+) is required as a cofactor.

It is found in the cytoplasm. One of several proteins that assist in the late maturation steps of the functional core of the 30S ribosomal subunit. Helps release RbfA from mature subunits. May play a role in the assembly of ribosomal proteins into the subunit. Circularly permuted GTPase that catalyzes slow GTP hydrolysis, GTPase activity is stimulated by the 30S ribosomal subunit. This chain is Small ribosomal subunit biogenesis GTPase RsgA, found in Onion yellows phytoplasma (strain OY-M).